The primary structure comprises 706 residues: 1,4-alpha-glucan-branching enzyme (706 aa).

(1,4-alpha-D-glucosyl)n-binding residues include tryptophan 96 and lysine 133. Residue aspartate 358 is the Nucleophile of the active site. Glutamate 419 acts as the Proton donor in catalysis.

Belongs to the glycosyl hydrolase 13 family. GlgB subfamily. In terms of assembly, monomer.

Its subcellular location is the cytoplasm. The enzyme catalyses Transfers a segment of a (1-&gt;4)-alpha-D-glucan chain to a primary hydroxy group in a similar glucan chain.. Its pathway is glycan biosynthesis; glycogen biosynthesis. In terms of biological role, glycogen-branching enzyme participates in the glycogen biosynthetic process along with glycogenin and glycogen synthase. Generates alpha-1,6-glucosidic branches from alpha-1,4-linked glucose chains, to increase solubility of the glycogen polymer. This chain is 1,4-alpha-glucan-branching enzyme (GLC3), found in Candida glabrata (strain ATCC 2001 / BCRC 20586 / JCM 3761 / NBRC 0622 / NRRL Y-65 / CBS 138) (Yeast).